We begin with the raw amino-acid sequence, 208 residues long: Small ribosomal subunit protein uS4 (208 aa).

The region spanning 98–160 is the S4 RNA-binding domain; that stretch reads CRLDNVVYRM…AKKQSRIQLA (63 aa).

It belongs to the universal ribosomal protein uS4 family. As to quaternary structure, part of the 30S ribosomal subunit. Contacts protein S5. The interaction surface between S4 and S5 is involved in control of translational fidelity.

In terms of biological role, one of the primary rRNA binding proteins, it binds directly to 16S rRNA where it nucleates assembly of the body of the 30S subunit. Its function is as follows. With S5 and S12 plays an important role in translational accuracy. In Ruthia magnifica subsp. Calyptogena magnifica, this protein is Small ribosomal subunit protein uS4.